Consider the following 279-residue polypeptide: Urease accessory protein UreD (279 aa).

Belongs to the UreD family. As to quaternary structure, ureD, UreF and UreG form a complex that acts as a GTP-hydrolysis-dependent molecular chaperone, activating the urease apoprotein by helping to assemble the nickel containing metallocenter of UreC. The UreE protein probably delivers the nickel.

It is found in the cytoplasm. In terms of biological role, required for maturation of urease via the functional incorporation of the urease nickel metallocenter. The chain is Urease accessory protein UreD from Rhodopseudomonas palustris (strain HaA2).